The chain runs to 828 residues: Protein SEY1 homolog (828 aa).

At 1–718 (MTEDVMNDDF…SSKNGISWKN (718 aa)) the chain is on the cytoplasmic side. Positions 44–284 (GFNYNVLSIL…VPSDGFFYYA (241 aa)) constitute a GB1/RHD3-type G domain. 54–61 (GCQSSGKS) serves as a coordination point for GTP. Residues 719-739 (IPPPFWILLLLCSWNELCSVL) traverse the membrane as a helical segment. Residues 740 to 742 (RIV) lie on the Lumenal side of the membrane. A helical membrane pass occupies residues 743–763 (FKVQVLIPLIILGFIVVQYFS). The Cytoplasmic portion of the chain corresponds to 764–828 (HLVFGTSADA…NDSGKKAEEN (65 aa)).

Belongs to the TRAFAC class dynamin-like GTPase superfamily. GB1/RHD3 GTPase family. RHD3 subfamily.

The protein resides in the endoplasmic reticulum membrane. Functionally, probable GTP-binding protein that may be involved in cell development. The sequence is that of Protein SEY1 homolog from Babesia bovis.